The chain runs to 308 residues: Vacuolar lysine transporter YPQ1 (308 aa).

The Vacuolar portion of the chain corresponds to 1 to 12; sequence MQLVPLELNRST. An N-linked (GlcNAc...) asparagine glycan is attached at Asn-9. Residues 10-76 form the PQ-loop 1 domain; sequence RSTLSGISGS…QHLLSTMIIL (67 aa). The chain crosses the membrane as a helical span at residues 13–33; sequence LSGISGSISISCWIIVFVPQI. Residues 34–44 lie on the Cytoplasmic side of the membrane; sequence YENFYRKSSDG. The chain crosses the membrane as a helical span at residues 45–65; the sequence is LSLLFVVLWLAGDVFNLMGAV. The Vacuolar segment spans residues 66-68; it reads MQH. Residues 69-89 traverse the membrane as a helical segment; sequence LLSTMIILAAYYTVADIILLG. Over 90 to 167 the chain is Cytoplasmic; the sequence is QCLWYDNEEK…EVNSRNLIKD (78 aa). The chain crosses the membrane as a helical span at residues 168 to 188; that stretch reads IFIVSGVVFVGFISWYVTYCV. Asn-189 carries an N-linked (GlcNAc...) asparagine glycan. At 189–205 the chain is on the vacuolar side; that stretch reads NYTQPPPVEDPSLPVPE. The chain crosses the membrane as a helical span at residues 206-226; it reads LQINWMAQIFGYLSALLYLGS. The region spanning 211–274 is the PQ-loop 2 domain; the sequence is MAQIFGYLSA…ISLDWKYLIM (64 aa). At 227–244 the chain is on the cytoplasmic side; it reads RIPQILLNFKRKSCEGIS. The helical transmembrane segment at 245-265 threads the bilayer; sequence FLFFLFACLGNTTFIFSVIVI. Residues 266–277 lie on the Vacuolar side of the membrane; the sequence is SLDWKYLIMNAS. Asn-275 is a glycosylation site (N-linked (GlcNAc...) asparagine). Residues 278–298 form a helical membrane-spanning segment; sequence WLVGSIGTLFMDFVIFSQFFI. Topologically, residues 299-308 are cytoplasmic; the sequence is YKRNKKFILN.

It belongs to the laat-1 family.

The protein localises to the vacuole membrane. Functionally, amino acid transporter that moves lysine into the vacuole. May also contribute to low affinity arginine import into the vacuole. Has also been suggested to mediate export of cationic amino acids from the vacuole. May function as an amino acid/proton antiporter. In Saccharomyces cerevisiae (strain ATCC 204508 / S288c) (Baker's yeast), this protein is Vacuolar lysine transporter YPQ1 (YPQ1).